The following is a 645-amino-acid chain: 1-deoxy-D-xylulose-5-phosphate synthase (645 aa).

Thiamine diphosphate contacts are provided by residues histidine 79 and 120–122 (AHS). Aspartate 155 is a Mg(2+) binding site. Residues 156–157 (GA), asparagine 184, tyrosine 293, and glutamate 375 contribute to the thiamine diphosphate site. Asparagine 184 contacts Mg(2+).

It belongs to the transketolase family. DXPS subfamily. As to quaternary structure, homodimer. It depends on Mg(2+) as a cofactor. Thiamine diphosphate serves as cofactor.

It catalyses the reaction D-glyceraldehyde 3-phosphate + pyruvate + H(+) = 1-deoxy-D-xylulose 5-phosphate + CO2. Its pathway is metabolic intermediate biosynthesis; 1-deoxy-D-xylulose 5-phosphate biosynthesis; 1-deoxy-D-xylulose 5-phosphate from D-glyceraldehyde 3-phosphate and pyruvate: step 1/1. Its function is as follows. Catalyzes the acyloin condensation reaction between C atoms 2 and 3 of pyruvate and glyceraldehyde 3-phosphate to yield 1-deoxy-D-xylulose-5-phosphate (DXP). This is 1-deoxy-D-xylulose-5-phosphate synthase from Ruegeria sp. (strain TM1040) (Silicibacter sp.).